The sequence spans 464 residues: Cysteine--tRNA ligase (464 aa).

Position 29 (C29) interacts with Zn(2+). A 'HIGH' region motif is present at residues 31–41 (ATVQGDPHIGH). Zn(2+) is bound by residues C207, H232, and E236. The 'KMSKS' region signature appears at 263–267 (KMSKS). Residue K266 participates in ATP binding.

It belongs to the class-I aminoacyl-tRNA synthetase family. As to quaternary structure, monomer. Requires Zn(2+) as cofactor.

It localises to the cytoplasm. It carries out the reaction tRNA(Cys) + L-cysteine + ATP = L-cysteinyl-tRNA(Cys) + AMP + diphosphate. This Rhodococcus jostii (strain RHA1) protein is Cysteine--tRNA ligase.